A 361-amino-acid chain; its full sequence is MKPSIYSLTRNDLIAWTIEHGEKKFRATQIWDWLYRKRVQSFEEMTNLSKDFIALLNENFLVNPLKQRIVQESADGTVKYLFELPDGMLIETVLMRQHYGLSVCVTTQVGCNIGCTFCASGLIKKQRDLNNGEITAQIMLVQKYFDERGQGERISHVVVMGIGEPFDNYDNVLKFLRTINDDNGLAIGARHITVSTSGLAHKIRDFANEGVQVNLAVSLHAPNNELRSSIMRINRSFPLEKLFAAIEYYIETTNRRVTFEYIMLNGVNDSPENAQELADLTKKIRKLSYVNLIPYNPVTEHDQYSRSPKERVDAFYDVLKKNGVNCVVRQEHGTDIDAACGQLRSNTMKRDREKATAGTAQ.

The Proton acceptor role is filled by Glu-91. The Radical SAM core domain maps to 97-335; sequence QHYGLSVCVT…CVVRQEHGTD (239 aa). A disulfide bridge connects residues Cys-104 and Cys-340. 3 residues coordinate [4Fe-4S] cluster: Cys-111, Cys-115, and Cys-118. S-adenosyl-L-methionine is bound by residues 163-164, Ser-195, 218-220, and Asn-296; these read GE and SLH. Cys-340 serves as the catalytic S-methylcysteine intermediate.

This sequence belongs to the radical SAM superfamily. RlmN family. [4Fe-4S] cluster is required as a cofactor.

Its subcellular location is the cytoplasm. The catalysed reaction is adenosine(2503) in 23S rRNA + 2 reduced [2Fe-2S]-[ferredoxin] + 2 S-adenosyl-L-methionine = 2-methyladenosine(2503) in 23S rRNA + 5'-deoxyadenosine + L-methionine + 2 oxidized [2Fe-2S]-[ferredoxin] + S-adenosyl-L-homocysteine. It catalyses the reaction adenosine(37) in tRNA + 2 reduced [2Fe-2S]-[ferredoxin] + 2 S-adenosyl-L-methionine = 2-methyladenosine(37) in tRNA + 5'-deoxyadenosine + L-methionine + 2 oxidized [2Fe-2S]-[ferredoxin] + S-adenosyl-L-homocysteine. Functionally, specifically methylates position 2 of adenine 2503 in 23S rRNA and position 2 of adenine 37 in tRNAs. In Streptococcus mutans serotype c (strain ATCC 700610 / UA159), this protein is Probable dual-specificity RNA methyltransferase RlmN.